We begin with the raw amino-acid sequence, 283 residues long: Non-selective voltage-gated ion channel VDAC1 (283 aa).

Ala2 is modified (N-acetylalanine). Residue Lys12 participates in ATP binding. Lys12 participates in a covalent cross-link: Glycyl lysine isopeptide (Lys-Gly) (interchain with G-Cter in ubiquitin). Ser13 is modified (phosphoserine). The residue at position 19 (Thr19) is a Phosphothreonine. An ATP-binding site is contributed by Lys20. Lys20 carries the N6-acetyllysine; alternate modification. Lys20 carries the post-translational modification N6-succinyllysine; alternate. Residue Lys20 forms a Glycyl lysine isopeptide (Lys-Gly) (interchain with G-Cter in ubiquitin); alternate linkage. A run of 2 beta stranded transmembrane segments spans residues 26-35 (LIKLDLKTKS) and 39-47 (LEFTSSGSA). Glycyl lysine isopeptide (Lys-Gly) (interchain with G-Cter in ubiquitin) cross-links involve residues Lys53 and Lys61. The chain crosses the membrane as a beta stranded span at residues 54–64 (VTGSLETKYRW). Residue Tyr67 is modified to Phosphotyrosine. The next 3 beta stranded transmembrane spans lie at 69 to 76 (LTFTEKWN), 80 to 89 (TLGTEITVED), and 95 to 104 (LKLTFDSSFS). Phosphothreonine is present on Thr107. An N6-acetyllysine; alternate modification is found at Lys109. A Glycyl lysine isopeptide (Lys-Gly) (interchain with G-Cter in ubiquitin); alternate cross-link involves residue Lys109. A Glycyl lysine isopeptide (Lys-Gly) (interchain with G-Cter in ubiquitin) cross-link involves residue Lys110. 4 beta stranded membrane passes run 111–120 (NAKIKTGYKR), 123–130 (INLGCDMD), 137–145 (SIRGALVLG), and 150–158 (LAGYQMNFE). Lys161 participates in a covalent cross-link: Glycyl lysine isopeptide (Lys-Gly) (interchain with G-Cter in ubiquitin). The next 6 membrane-spanning stretches (beta stranded) occupy residues 163–175 (RVTQSNFAVGYKT), 178–185 (FQLHTNVN), 189–198 (EFGGSIYQKV), 202–211 (LETAVNLAWT), 218–227 (RFGIAAKYQI), and 231–238 (ACFSAKVN). Ser193 carries the post-translational modification Phosphoserine; by NEK1. Ser240 carries the post-translational modification Phosphoserine. Residue 242 to 244 (LIG) participates in NAD(+) binding. Residues 242-251 (LIGLGYTQTL) traverse the membrane as a beta stranded segment. Lys252 is subject to N6-acetyllysine. Residues 254-263 (GIKLTLSALL) form a beta stranded membrane-spanning segment. Position 260 to 264 (260 to 264 (SALLD)) interacts with NAD(+). Lys266 carries the post-translational modification N6-acetyllysine; alternate. Lys266 participates in a covalent cross-link: Glycyl lysine isopeptide (Lys-Gly) (interchain with G-Cter in ubiquitin); alternate. The chain crosses the membrane as a beta stranded span at residues 273–282 (HKLGLGLEFQ). A Glycyl lysine isopeptide (Lys-Gly) (interchain with G-Cter in ubiquitin) cross-link involves residue Lys274.

The protein belongs to the eukaryotic mitochondrial porin family. In terms of assembly, homodimer and homotrimer; in response to cyclic AMP or calcium; oligomerization is required for scramblase activity. Component of the mitochondrial permeability transition pore complex (mPTPC), at least composed of SPG7, VDAC1 and PPIF. Interacts with SPG7, NIPSNAP2 and SLC25A30. Interacts with hexokinases including HK1. The HK1-VDAC1 complex interacts with ATF2. Interacts with BCL2L1. Interacts with BAK1. Interacts with RTL10/BOP (via BH3 domain). Interacts with amyloid-beta and APP; induces VDAC1 dephosphorylation. Interacts with TMEM41B. Interacts with BCAP31. Interacts with HSPA9; this interaction couples ITPR1 to VDAC1. As to quaternary structure, (Microbial infection) Interacts with influenza A virus PB1-F2 protein. Post-translationally, phosphorylation at Ser-193 by NEK1 promotes the closed conformational state preventing excessive mitochondrial membrane permeability and subsequent apoptotic cell death after injury. Phosphorylation by the AKT-GSK3B axis stabilizes the protein probably by preventing ubiquitin-mediated proteasomal degradation. In terms of processing, ubiquitinated. Undergoes monoubiquitination and polyubiquitination by PRKN; monoubiquitination at Lys-274 inhibits apoptosis, whereas polyubiquitination leads to its degradation and promotes mitophagy. Deubiquitinated by USP30. In terms of tissue distribution, expressed in erythrocytes (at protein level). Expressed in heart, liver and skeletal muscle.

Its subcellular location is the mitochondrion outer membrane. The protein localises to the cell membrane. It localises to the membrane raft. It catalyses the reaction chloride(in) = chloride(out). It carries out the reaction K(+)(in) = K(+)(out). The enzyme catalyses ATP(in) = ATP(out). The catalysed reaction is Ca(2+)(in) = Ca(2+)(out). It catalyses the reaction Na(+)(in) = Na(+)(out). It carries out the reaction Mg(2+)(in) = Mg(2+)(out). The enzyme catalyses L-glutamate(out) = L-glutamate(in). The catalysed reaction is dopamine(out) = dopamine(in). It catalyses the reaction acetylcholine(in) = acetylcholine(out). It carries out the reaction Fe(III)-[cytochrome c](out) = Fe(III)-[cytochrome c](in). The enzyme catalyses a 1,2-diacyl-sn-glycero-3-phosphocholine(in) = a 1,2-diacyl-sn-glycero-3-phosphocholine(out). The catalysed reaction is a 1,2-diacyl-sn-glycero-3-phospho-L-serine(in) = a 1,2-diacyl-sn-glycero-3-phospho-L-serine(out). Inhibited by nitric oxide. Its function is as follows. Non-selective voltage-gated ion channel that mediates the transport of anions and cations through the mitochondrion outer membrane and plasma membrane. The channel at the outer mitochondrial membrane allows diffusion of small hydrophilic molecules; in the plasma membrane it is involved in cell volume regulation and apoptosis. It adopts an open conformation at low or zero membrane potential and a closed conformation at potentials above 30-40 mV. The open state has a weak anion selectivity whereas the closed state is cation-selective. Binds various signaling molecules, including the sphingolipid ceramide, the phospholipid phosphatidylcholine, and the sterols cholesterol and oxysterol. In depolarized mitochondria, acts downstream of PRKN and PINK1 to promote mitophagy or prevent apoptosis; polyubiquitination by PRKN promotes mitophagy, while monoubiquitination by PRKN decreases mitochondrial calcium influx which ultimately inhibits apoptosis. May participate in the formation of the permeability transition pore complex (PTPC) responsible for the release of mitochondrial products that triggers apoptosis. May mediate ATP export from cells. Part of a complex composed of HSPA9, ITPR1 and VDAC1 that regulates mitochondrial calcium-dependent apoptosis by facilitating calcium transport from the ER lumen to the mitochondria intermembrane space thus providing calcium for the downstream calcium channel MCU that directly releases it into mitochondria matrix. Mediates cytochrome c efflux. Functionally, catalyzes the scrambling of phospholipids across the outer mitochondrial membrane; the mechanism is unrelated to channel activity and is capable of translocating both anionic and zwitterionic phospholipids. The protein is Non-selective voltage-gated ion channel VDAC1 of Homo sapiens (Human).